The sequence spans 876 residues: MAP7 domain-containing protein 3 (876 aa).

Position 1 is an N-acetylmethionine (methionine 1). Residues 65–144 (NDIKQRLARE…DEAQKEKFTA (80 aa)) adopt a coiled-coil conformation. Disordered regions lie at residues 72–137 (ARER…KDEA) and 170–246 (AMAN…KPRV). The span at 171 to 183 (MANSESKTANKRS) shows a compositional bias: polar residues. A Phosphoserine modification is found at serine 185. Residues 191 to 211 (QGTSALIRQMPLSSAGLQNSV) are compositionally biased toward polar residues. Over residues 214 to 244 (RKTDKERSSSLNRRDSNLHSSTDKEQAERKP) the composition is skewed to basic and acidic residues. At serine 322 the chain carries Phosphoserine. The tract at residues 407-475 (EAAPEGSLEA…ARDAPKKSEM (69 aa)) is disordered. Basic and acidic residues predominate over residues 425 to 438 (APKESVKGSPKESM). A phosphoserine mark is found at serine 441, serine 457, and serine 461. The span at 465 to 475 (KARDAPKKSEM) shows a compositional bias: basic and acidic residues. At serine 490 the chain carries Phosphoserine. 3 disordered regions span residues 509-533 (SPISTNRQIQKNCPPSPLPLISKQS), 613-697 (QREK…KKEH), and 723-754 (RKTDVNASKVTETSSHDIYEEAEADNEESDKD). Over residues 510 to 521 (PISTNRQIQKNC) the composition is skewed to polar residues. At serine 524 the chain carries Phosphoserine. Coiled coils occupy residues 558–640 (VKKK…MAKE) and 689–724 (EADKRKKEHERIMLQNLQERLERKKRIEEIMKRTRK). 2 stretches are compositionally biased toward basic and acidic residues: residues 613 to 639 (QREKEEEERQREEMQQRVIKKSKDMAK) and 680 to 697 (GDAKIKAQEEADKRKKEH). The span at 742 to 752 (EEAEADNEESD) shows a compositional bias: acidic residues. Phosphoserine occurs at positions 770 and 817. Residues 802–876 (PKTYFNGDLK…LPKSSDTFRQ (75 aa)) are disordered. Residues 820–830 (DTSIQEVVSRP) are compositionally biased toward polar residues. Positions 831-842 (SSKRMTSHTTKT) are enriched in basic residues. Phosphoserine is present on serine 832. Residues 848-860 (TNTTSRSSAQTKS) are compositionally biased toward polar residues. Residues 861–876 (EGFHDILPKSSDTFRQ) show a composition bias toward basic and acidic residues.

It belongs to the MAP7 family. Interacts (via N-terminus coiled coil domains) with tubulin and microtubules.

It is found in the cytoplasm. It localises to the cytoskeleton. The protein localises to the spindle. Functionally, promotes the assembly and stability of microtubules. The polypeptide is MAP7 domain-containing protein 3 (MAP7D3) (Homo sapiens (Human)).